Here is a 186-residue protein sequence, read N- to C-terminus: dCTP deaminase (186 aa).

107–112 is a dCTP binding site; the sequence is KSSYAR. Residue E133 is the Proton donor/acceptor of the active site. DCTP contacts are provided by Q152, Y166, and Q176.

It belongs to the dCTP deaminase family. As to quaternary structure, homotrimer.

It catalyses the reaction dCTP + H2O + H(+) = dUTP + NH4(+). The protein operates within pyrimidine metabolism; dUMP biosynthesis; dUMP from dCTP (dUTP route): step 1/2. Catalyzes the deamination of dCTP to dUTP. This Chloroflexus aurantiacus (strain ATCC 29366 / DSM 635 / J-10-fl) protein is dCTP deaminase.